A 206-amino-acid chain; its full sequence is Small ribosomal subunit protein uS4 (206 aa).

In terms of domain architecture, S4 RNA-binding spans 96–156 (CRLDNVVYRM…EKAKNQLRIV (61 aa)).

The protein belongs to the universal ribosomal protein uS4 family. In terms of assembly, part of the 30S ribosomal subunit. Contacts protein S5. The interaction surface between S4 and S5 is involved in control of translational fidelity.

Functionally, one of the primary rRNA binding proteins, it binds directly to 16S rRNA where it nucleates assembly of the body of the 30S subunit. Its function is as follows. With S5 and S12 plays an important role in translational accuracy. The sequence is that of Small ribosomal subunit protein uS4 from Pseudomonas fluorescens (strain Pf0-1).